A 330-amino-acid chain; its full sequence is Src kinase-associated phosphoprotein 2-A (330 aa).

The segment at 53-77 (QDFQDKAETDDQEENDGFSLPPDAV) is disordered. Residues 105–208 (DYLRAGYLEK…WINVIMNARG (104 aa)) form the PH domain. The disordered stretch occupies residues 228–261 (SHEEDIYEELPEESEKPVTGSETPKATPVPVNNT). Polar residues predominate over residues 247-261 (GSETPKATPVPVNNT). The 62-residue stretch at 268-329 (DYANFYRGLW…PKAYIIEMYD (62 aa)) folds into the SH3 domain.

The protein belongs to the SKAP family. In terms of processing, phosphorylated on tyrosines.

Its subcellular location is the cytoplasm. Its function is as follows. May be involved in B-cell and macrophage adhesion processes. May play a role in src signaling pathway. In Xenopus laevis (African clawed frog), this protein is Src kinase-associated phosphoprotein 2-A (skap2-a).